A 207-amino-acid chain; its full sequence is MYSAPSACTCLCLHFLLLCFQVQVLAAEENVDFRIHVENQTRARDDVSRKQLRLYQLYSRTSGKHIQVLGRRISARGEDGDKYAQLLVETDTFGSQVRIKGKETEFYLCMNRKGKLVGKPDGTSKECVFIEKVLENNYTALMSAKYSGWYVGFTKKGRPRKGPKTRENQQDVHFMKRYPKGQTELQKPFKYTTVTKRSRRIRPTHPG.

The signal sequence occupies residues 1–27 (MYSAPSACTCLCLHFLLLCFQVQVLAA). N-linked (GlcNAc...) asparagine glycosylation occurs at Asn39. The cysteines at positions 109 and 127 are disulfide-linked. N-linked (GlcNAc...) asparagine glycosylation is present at Asn137. The disordered stretch occupies residues 157 to 183 (GRPRKGPKTRENQQDVHFMKRYPKGQT). Residues 164–174 (KTRENQQDVHF) show a composition bias toward basic and acidic residues.

The protein belongs to the heparin-binding growth factors family. In terms of assembly, interacts with FGFR3 and FGFR4. Mainly expressed in the lung. Not detected in brain, heart, liver, kidney and small intestine.

The protein resides in the secreted. Its function is as follows. Plays an important role in the regulation of cell proliferation, cell differentiation and cell migration. Required for normal ossification and bone development. Stimulates hepatic and intestinal proliferation. This chain is Fibroblast growth factor 18 (Fgf18), found in Rattus norvegicus (Rat).